A 144-amino-acid polypeptide reads, in one-letter code: Kunitz-type elastase inhibitor BrEI (144 aa).

Asn38 is a glycosylation site (N-linked (GlcNAc...) asparagine). A disulfide bridge connects residues Cys41 and Cys88.

Belongs to the leguminous Kunitz-type inhibitor family.

Functionally, inhibitor of porcine pancreatic elastase with a Ki of 27 nM. Does not inhibit human neutrophil elastase, bovine trypsin, human plasma kallikrein or porcine pancreatic kallikrein. The chain is Kunitz-type elastase inhibitor BrEI from Bauhinia rufa (Orchid tree).